The chain runs to 220 residues: SAGA-associated factor 11 homolog (220 aa).

Positions 1-38 (MSTGTANSAVSSKSTNSTTSTSKVPVNEKSNNSQNANT) are disordered. The segment at 126 to 147 (CTCPNCDRPVSAARFAPHLEKC) adopts an SGF11-type zinc-finger fold. 2 stretches are compositionally biased toward low complexity: residues 160–177 (RRLA…SSSS) and 204–220 (SQNS…GKTF). The disordered stretch occupies residues 160 to 220 (RRLATKESNS…GSKKNNGKTF (61 aa)).

This sequence belongs to the SGF11 family. As to quaternary structure, component of some SAGA transcription coactivator-HAT complexes. Within the SAGA complex, participates in a subcomplex of SAGA called the DUB module (deubiquitination module).

It localises to the nucleus. Its function is as follows. Component of the transcription regulatory histone acetylation (HAT) complex SAGA, a multiprotein complex that activates transcription by remodeling chromatin and mediating histone acetylation and deubiquitination. Within the SAGA complex, participates in a subcomplex that specifically deubiquitinates histone H2B. The SAGA complex is recruited to specific gene promoters by activators, where it is required for transcription. This is SAGA-associated factor 11 homolog from Musca domestica (House fly).